The primary structure comprises 234 residues: Enolase-phosphatase E1 (234 aa).

Residues Asp10 and Glu12 each coordinate Mg(2+). Residues Ser125 to Ser126 and Lys162 each bind substrate. Asp188 provides a ligand contact to Mg(2+).

The protein belongs to the HAD-like hydrolase superfamily. MasA/MtnC family. Monomer. It depends on Mg(2+) as a cofactor.

The protein localises to the cytoplasm. It localises to the nucleus. The enzyme catalyses 5-methylsulfanyl-2,3-dioxopentyl phosphate + H2O = 1,2-dihydroxy-5-(methylsulfanyl)pent-1-en-3-one + phosphate. Its pathway is amino-acid biosynthesis; L-methionine biosynthesis via salvage pathway; L-methionine from S-methyl-5-thio-alpha-D-ribose 1-phosphate: step 3/6. It functions in the pathway amino-acid biosynthesis; L-methionine biosynthesis via salvage pathway; L-methionine from S-methyl-5-thio-alpha-D-ribose 1-phosphate: step 4/6. Its function is as follows. Bifunctional enzyme that catalyzes the enolization of 2,3-diketo-5-methylthiopentyl-1-phosphate (DK-MTP-1-P) into the intermediate 2-hydroxy-3-keto-5-methylthiopentenyl-1-phosphate (HK-MTPenyl-1-P), which is then dephosphorylated to form the acireductone 1,2-dihydroxy-3-keto-5-methylthiopentene (DHK-MTPene). The polypeptide is Enolase-phosphatase E1 (Sordaria macrospora (strain ATCC MYA-333 / DSM 997 / K(L3346) / K-hell)).